Here is a 375-residue protein sequence, read N- to C-terminus: Thiamine-phosphate synthase (375 aa).

The interval 1-127 is unknown; it reads MTNAESRTVL…AACIESIRYQ (127 aa). The thiamine-phosphate synthase stretch occupies residues 128-375; that stretch reads CYATFRELEL…SSDVCPLPND (248 aa). 4-amino-2-methyl-5-(diphosphooxymethyl)pyrimidine is bound by residues 183–185 and Asn215; that span reads QLR. Positions 216 and 235 each coordinate Mg(2+). The 4-amino-2-methyl-5-(diphosphooxymethyl)pyrimidine site is built by Ser254 and Lys283. Gly315 contacts 2-[(2R,5Z)-2-carboxy-4-methylthiazol-5(2H)-ylidene]ethyl phosphate.

Belongs to the thiamine-phosphate synthase family. Requires Mg(2+) as cofactor.

It catalyses the reaction 2-[(2R,5Z)-2-carboxy-4-methylthiazol-5(2H)-ylidene]ethyl phosphate + 4-amino-2-methyl-5-(diphosphooxymethyl)pyrimidine + 2 H(+) = thiamine phosphate + CO2 + diphosphate. The enzyme catalyses 2-(2-carboxy-4-methylthiazol-5-yl)ethyl phosphate + 4-amino-2-methyl-5-(diphosphooxymethyl)pyrimidine + 2 H(+) = thiamine phosphate + CO2 + diphosphate. The catalysed reaction is 4-methyl-5-(2-phosphooxyethyl)-thiazole + 4-amino-2-methyl-5-(diphosphooxymethyl)pyrimidine + H(+) = thiamine phosphate + diphosphate. The protein operates within cofactor biosynthesis; thiamine diphosphate biosynthesis; thiamine phosphate from 4-amino-2-methyl-5-diphosphomethylpyrimidine and 4-methyl-5-(2-phosphoethyl)-thiazole: step 1/1. Its function is as follows. Condenses 4-methyl-5-(beta-hydroxyethyl)thiazole monophosphate (THZ-P) and 2-methyl-4-amino-5-hydroxymethyl pyrimidine pyrophosphate (HMP-PP) to form thiamine monophosphate (TMP). The polypeptide is Thiamine-phosphate synthase (thiE) (Rhodopirellula baltica (strain DSM 10527 / NCIMB 13988 / SH1)).